The sequence spans 397 residues: 8-amino-7-oxononanoate synthase (397 aa).

A substrate-binding site is contributed by Arg-23. 110–111 (GY) provides a ligand contact to pyridoxal 5'-phosphate. Residue His-135 participates in substrate binding. Residues Ser-181, His-209, and Thr-237 each contribute to the pyridoxal 5'-phosphate site. Residue Lys-240 is modified to N6-(pyridoxal phosphate)lysine. Residue Thr-354 participates in substrate binding.

Belongs to the class-II pyridoxal-phosphate-dependent aminotransferase family. BioF subfamily. Homodimer. Pyridoxal 5'-phosphate serves as cofactor.

The catalysed reaction is 6-carboxyhexanoyl-[ACP] + L-alanine + H(+) = (8S)-8-amino-7-oxononanoate + holo-[ACP] + CO2. Its pathway is cofactor biosynthesis; biotin biosynthesis. Functionally, catalyzes the decarboxylative condensation of pimeloyl-[acyl-carrier protein] and L-alanine to produce 8-amino-7-oxononanoate (AON), [acyl-carrier protein], and carbon dioxide. The polypeptide is 8-amino-7-oxononanoate synthase (Anaeromyxobacter sp. (strain Fw109-5)).